A 530-amino-acid chain; its full sequence is Ubiquitin carboxyl-terminal hydrolase 17-like protein 12 (530 aa).

The region spanning Ala-80 to Lys-375 is the USP domain. Catalysis depends on Cys-89, which acts as the Nucleophile. His-334 (proton acceptor) is an active-site residue. Basic and acidic residues-rich tracts occupy residues Ser-382–Arg-392 and Asp-398–His-412. Disordered stretches follow at residues Ser-382–His-412 and Asn-477–Gln-530. Positions Ser-484–Thr-495 are enriched in low complexity. Residues His-496–Leu-505 show a composition bias toward polar residues. Residues Gly-510–Arg-524 are compositionally biased toward basic residues.

This sequence belongs to the peptidase C19 family. USP17 subfamily.

The protein localises to the nucleus. It localises to the endoplasmic reticulum. It carries out the reaction Thiol-dependent hydrolysis of ester, thioester, amide, peptide and isopeptide bonds formed by the C-terminal Gly of ubiquitin (a 76-residue protein attached to proteins as an intracellular targeting signal).. Its function is as follows. Deubiquitinating enzyme that removes conjugated ubiquitin from specific proteins to regulate different cellular processes that may include cell proliferation, progression through the cell cycle, apoptosis, cell migration, and the cellular response to viral infection. This is Ubiquitin carboxyl-terminal hydrolase 17-like protein 12 (USP17L12) from Homo sapiens (Human).